A 615-amino-acid polypeptide reads, in one-letter code: Chaperone protein HtpG (615 aa).

The segment at 1 to 335 is a; substrate-binding; sequence MSAEKQTHGF…APDLPLNVSR (335 aa). The interval 336 to 541 is b; sequence ELLQDYGPVQ…EDQLGPQMRR (206 aa). Residues 542–615 are c; it reads MLEAAGQPVP…RMQALLSQSV (74 aa).

Belongs to the heat shock protein 90 family. As to quaternary structure, homodimer.

The protein localises to the cytoplasm. Functionally, molecular chaperone. Has ATPase activity. The polypeptide is Chaperone protein HtpG (Alcanivorax borkumensis (strain ATCC 700651 / DSM 11573 / NCIMB 13689 / SK2)).